A 71-amino-acid chain; its full sequence is Small ribosomal subunit protein bS21 (71 aa).

A compositionally biased stretch (basic residues) spans 50-59 (AAAVKRHAKK). Residues 50–71 (AAAVKRHAKKVQREQRRAVRLY) are disordered. A compositionally biased stretch (basic and acidic residues) spans 60–71 (VQREQRRAVRLY).

Belongs to the bacterial ribosomal protein bS21 family.

The protein is Small ribosomal subunit protein bS21 of Pseudomonas fluorescens (strain ATCC BAA-477 / NRRL B-23932 / Pf-5).